Here is a 320-residue protein sequence, read N- to C-terminus: Cytochrome f (320 aa).

Residues 1–35 form the signal peptide; the sequence is MRNINTYDWMKKWMTRSISILVMIHMITRTSISNA. Heme contacts are provided by Tyr36, Cys56, Cys59, and His60. The chain crosses the membrane as a helical span at residues 286–306; that stretch reads VQGLLLLLASVILAQIFLVLK.

The protein belongs to the cytochrome f family. In terms of assembly, the 4 large subunits of the cytochrome b6-f complex are cytochrome b6, subunit IV (17 kDa polypeptide, petD), cytochrome f and the Rieske protein, while the 4 small subunits are PetG, PetL, PetM and PetN. The complex functions as a dimer. It depends on heme as a cofactor.

Its subcellular location is the plastid. The protein localises to the chloroplast thylakoid membrane. In terms of biological role, component of the cytochrome b6-f complex, which mediates electron transfer between photosystem II (PSII) and photosystem I (PSI), cyclic electron flow around PSI, and state transitions. In Cycas taitungensis (Prince sago), this protein is Cytochrome f.